The chain runs to 160 residues: MPHSYGIRARTRYTFQRGFREHGQIRLSTYLKTYKVGDIVDIKVNGAVQKGMPHKYYHGKTGVVYNVTQSSVGVLIYKVVGNRYMEKRVNVRIEHVKHSKCRQDFLDRVKANEAKRKEAKAQGKTVQLRRQPAPPAKAHFVSTENNEPVTLHPVAYDTTI.

Residues Ala-114–Ala-138 are disordered.

This sequence belongs to the eukaryotic ribosomal protein eL21 family. In terms of assembly, component of the large ribosomal subunit (LSU). Mature yeast ribosomes consist of a small (40S) and a large (60S) subunit. The 40S small subunit contains 1 molecule of ribosomal RNA (18S rRNA) and at least 33 different proteins. The large 60S subunit contains 3 rRNA molecules (25S, 5.8S and 5S rRNA) and at least 46 different proteins.

Its subcellular location is the cytoplasm. In terms of biological role, component of the ribosome, a large ribonucleoprotein complex responsible for the synthesis of proteins in the cell. The small ribosomal subunit (SSU) binds messenger RNAs (mRNAs) and translates the encoded message by selecting cognate aminoacyl-transfer RNA (tRNA) molecules. The large subunit (LSU) contains the ribosomal catalytic site termed the peptidyl transferase center (PTC), which catalyzes the formation of peptide bonds, thereby polymerizing the amino acids delivered by tRNAs into a polypeptide chain. The nascent polypeptides leave the ribosome through a tunnel in the LSU and interact with protein factors that function in enzymatic processing, targeting, and the membrane insertion of nascent chains at the exit of the ribosomal tunnel. The protein is Large ribosomal subunit protein eL21A (rpl2101) of Schizosaccharomyces pombe (strain 972 / ATCC 24843) (Fission yeast).